The primary structure comprises 420 residues: D-tagatose-1,6-bisphosphate aldolase subunit GatZ (420 aa).

It belongs to the GatZ/KbaZ family. GatZ subfamily. Forms a complex with GatY.

The protein operates within carbohydrate metabolism; D-tagatose 6-phosphate degradation; D-glyceraldehyde 3-phosphate and glycerone phosphate from D-tagatose 6-phosphate: step 2/2. In terms of biological role, component of the tagatose-1,6-bisphosphate aldolase GatYZ that is required for full activity and stability of the Y subunit. Could have a chaperone-like function for the proper and stable folding of GatY. When expressed alone, GatZ does not show any aldolase activity. Is involved in the catabolism of galactitol. In Shigella flexneri serotype 5b (strain 8401), this protein is D-tagatose-1,6-bisphosphate aldolase subunit GatZ.